The chain runs to 125 residues: Histone H2A.v3 (125 aa).

This sequence belongs to the histone H2A family. In terms of assembly, the nucleosome is a histone octamer containing two molecules each of H2A, H2B, H3 and H4 assembled in one H3-H4 heterotetramer and two H2A-H2B heterodimers. The octamer wraps approximately 147 bp of DNA.

It localises to the nucleus. The protein localises to the chromosome. In terms of biological role, core component of nucleosome which plays a central role in DNA double strand break (DSB) repair. Nucleosomes wrap and compact DNA into chromatin, limiting DNA accessibility to the cellular machineries which require DNA as a template. Histones thereby play a central role in transcription regulation, DNA repair, DNA replication and chromosomal stability. DNA accessibility is regulated via a complex set of post-translational modifications of histones, also called histone code, and nucleosome remodeling. The polypeptide is Histone H2A.v3 (H2Av3) (Dictyostelium discoideum (Social amoeba)).